Consider the following 297-residue polypeptide: tRNA-cytidine(32) 2-sulfurtransferase (297 aa).

A PP-loop motif motif is present at residues 45–50 (SGGKDS). [4Fe-4S] cluster-binding residues include Cys120, Cys123, and Cys211.

The protein belongs to the TtcA family. Homodimer. It depends on Mg(2+) as a cofactor. Requires [4Fe-4S] cluster as cofactor.

It is found in the cytoplasm. It catalyses the reaction cytidine(32) in tRNA + S-sulfanyl-L-cysteinyl-[cysteine desulfurase] + AH2 + ATP = 2-thiocytidine(32) in tRNA + L-cysteinyl-[cysteine desulfurase] + A + AMP + diphosphate + H(+). The protein operates within tRNA modification. Its function is as follows. Catalyzes the ATP-dependent 2-thiolation of cytidine in position 32 of tRNA, to form 2-thiocytidine (s(2)C32). The sulfur atoms are provided by the cysteine/cysteine desulfurase (IscS) system. This chain is tRNA-cytidine(32) 2-sulfurtransferase, found in Vibrio parahaemolyticus serotype O3:K6 (strain RIMD 2210633).